We begin with the raw amino-acid sequence, 402 residues long: Speedy protein E6 (402 aa).

The tract at residues 1-89 is disordered; it reads MDRTETRFRK…EEPEKELAPE (89 aa). The segment covering 16 to 39 has biased composition (polar residues); sequence GKITTSRQPHPQNEQSPQRSTSGY. Positions 76 to 89 are enriched in acidic residues; the sequence is DESEEEPEKELAPE.

The protein belongs to the Speedy/Ringo family.

The sequence is that of Speedy protein E6 (SPDYE6) from Homo sapiens (Human).